The sequence spans 268 residues: MFSEYLKFFLYGLIQGLTEFFPVSSTAHLKVISVFFGIDDPGPSLSAIIQLGSVLALVCYFRNDFFKLKIQSSKKIFDYLIHERLLRSIFIGTIPIILLGGTIKLFVPYFFDEIFRSNLSIALVSFLMAILMYIADRSKKGSINLKNHKYSDSFLIGLSQALAIFPGVSRSGVTISTALLSGWGRSDSAKFSFLLGMPAISFAAIVEFISSFNAFSSFSFFPLIVGLTTTFLSSLLAIHFLLKYFSSNGLKLFIIYRIVFGFVILLNL.

7 helical membrane-spanning segments follow: residues 41–61, 89–109, 114–134, 155–175, 191–211, 218–238, and 248–268; these read PGPSLSAIIQLGSVLALVCYF, IFIGTIPIILLGGTIKLFVPY, IFRSNLSIALVSFLMAILMYI, LIGLSQALAIFPGVSRSGVTI, FSFLLGMPAISFAAIVEFISS, FSFFPLIVGLTTTFLSSLLAI, and NGLKLFIIYRIVFGFVILLNL.

This sequence belongs to the UppP family.

The protein resides in the cell inner membrane. It carries out the reaction di-trans,octa-cis-undecaprenyl diphosphate + H2O = di-trans,octa-cis-undecaprenyl phosphate + phosphate + H(+). Catalyzes the dephosphorylation of undecaprenyl diphosphate (UPP). Confers resistance to bacitracin. In Prochlorococcus marinus (strain MIT 9312), this protein is Undecaprenyl-diphosphatase.